The primary structure comprises 853 residues: FIGNL1-interacting regulator of recombination and mitosis (853 aa).

Phosphoserine; by PLK1 occurs at positions 43 and 744. Position 792 is an N6-acetyllysine (K792).

In terms of assembly, interacts (via its N-terminal region) with PLK1; controls PLK1 kinase activity. Interacts (via the KVVXF motif) with PPP1CC; controls PLK1 kinase activity. Interacts with FIGNL1; may regulate homologous recombination. Phosphorylation at Ser-43 by PLK1 strengthens FIRRM-PLK1 interaction. Phosphorylation at Ser-744 by PLK1 negatively regulates its interaction with PPP1CC.

It is found in the chromosome. The protein resides in the centromere. It localises to the kinetochore. Its subcellular location is the nucleus. The protein localises to the midbody. It is found in the cytoplasm. The protein resides in the cytoskeleton. It localises to the spindle. Its function is as follows. Regulates PLK1 kinase activity at kinetochores and promotes faithful chromosome segregation in prometaphase by bridging kinase and phosphatase activities. Phosphorylation of FIRRM by PLK1 negatively regulates its interaction with the phosphatase, PPP1CC, thus creating a negative feedback loop for maintaining proper PLK1 kinase activity during mitosis. In complex with FIGL1 may regulate homologous recombination. In Homo sapiens (Human), this protein is FIGNL1-interacting regulator of recombination and mitosis.